The primary structure comprises 170 residues: Protein GrpE (170 aa).

The disordered stretch occupies residues 1-29; sequence MSEEIKNEEIVEEVEATEEVVETPEKSEL. Over residues 10-22 the composition is skewed to acidic residues; the sequence is IVEEVEATEEVVE.

Belongs to the GrpE family. As to quaternary structure, homodimer.

Its subcellular location is the cytoplasm. Participates actively in the response to hyperosmotic and heat shock by preventing the aggregation of stress-denatured proteins, in association with DnaK and GrpE. It is the nucleotide exchange factor for DnaK and may function as a thermosensor. Unfolded proteins bind initially to DnaJ; upon interaction with the DnaJ-bound protein, DnaK hydrolyzes its bound ATP, resulting in the formation of a stable complex. GrpE releases ADP from DnaK; ATP binding to DnaK triggers the release of the substrate protein, thus completing the reaction cycle. Several rounds of ATP-dependent interactions between DnaJ, DnaK and GrpE are required for fully efficient folding. The chain is Protein GrpE from Streptococcus suis (strain 98HAH33).